We begin with the raw amino-acid sequence, 476 residues long: Doublesex- and mab-3-related transcription factor 3 (476 aa).

Residues 29 to 76 (CARCRNHGVLSWLKGHKRYCRFKDCTCEKCILIIERQRVMAAQVALRR) constitute a DNA-binding region (DM). 2 disordered regions span residues 89–130 (DSLR…RPTA) and 147–195 (GTLP…SKNC). The span at 102 to 121 (DAAATAATASQSSPASQASQ) shows a compositional bias: low complexity. Residues 165–174 (DSSSTDNTAE) show a composition bias toward polar residues. Residues 176-185 (FSDKDTDQRS) show a composition bias toward basic and acidic residues. The DMA domain maps to 255 to 290 (RPPLEVLKKIFPNQKPTVLELILKGCGGDLVSAVEV). Over residues 418 to 432 (NSTSVFRSSPVLSSR) the composition is skewed to polar residues. The interval 418-476 (NSTSVFRSSPVLSSRTTEDPRISIPDDGCPIVTKQSIYTEDDYDERSDSSDSRILNTSS) is disordered.

Belongs to the DMRT family. Expressed in the ventral spinal cord, in a restrical population of neurons migrating ventrically in the developing spinal cord at 11.5 dpc.

It is found in the nucleus. In terms of biological role, probable transcription factor that plays a role in configuring the spinal circuits controlling stride in vertebrates. Involved in neuronal specification within specific subdivision of spinal cord neurons and in the development of a coordinated locomotor network controlling limb movements. May regulate transcription during sexual development. In Mus musculus (Mouse), this protein is Doublesex- and mab-3-related transcription factor 3 (Dmrt3).